The following is a 217-amino-acid chain: Probable transaldolase (217 aa).

The Schiff-base intermediate with substrate role is filled by lysine 83.

This sequence belongs to the transaldolase family. Type 3B subfamily.

It localises to the cytoplasm. It carries out the reaction D-sedoheptulose 7-phosphate + D-glyceraldehyde 3-phosphate = D-erythrose 4-phosphate + beta-D-fructose 6-phosphate. It functions in the pathway carbohydrate degradation; pentose phosphate pathway; D-glyceraldehyde 3-phosphate and beta-D-fructose 6-phosphate from D-ribose 5-phosphate and D-xylulose 5-phosphate (non-oxidative stage): step 2/3. Transaldolase is important for the balance of metabolites in the pentose-phosphate pathway. This is Probable transaldolase from Brucella anthropi (strain ATCC 49188 / DSM 6882 / CCUG 24695 / JCM 21032 / LMG 3331 / NBRC 15819 / NCTC 12168 / Alc 37) (Ochrobactrum anthropi).